A 439-amino-acid chain; its full sequence is Probable N-acetylmuramidase (439 aa).

A signal peptide spans 1 to 57 (MPVSRIKVKNRHLKKKAKKPLAFYKPATKFAGAVLIAGTLTTTHELLLQQTSPMVQA). 2 disordered regions span residues 218–241 (SAGT…TSST) and 287–320 (SSSS…PASQ). The region spanning 241-284 (TTYTVKSGDTLWGISQKYGISVAQIQSANNLKSTVIYIGQKLVL) is the LysM 1 domain. The segment covering 287 to 319 (SSSSSNTNSSTSSGNSAGTTTPTTSVTPAKPAS) has biased composition (low complexity). The LysM 2 domain occupies 321 to 364 (TTIKVKSGDTLWGLSVKYKTTIAQLKSWNHLNSDTIFIGQNLIV). The tract at residues 372-393 (SSSTGSSSASTSSTSNSSAASN) is disordered. One can recognise a LysM 3 domain in the interval 395–438 (SIHKVVKGDTLWGLSQKSGSPIASIKAWNHLSSDTILIGQYLRI).

Belongs to the glycosyl hydrolase 73 family.

The protein localises to the secreted. It catalyses the reaction Hydrolysis of (1-&gt;4)-beta-linkages between N-acetylmuramic acid and N-acetyl-D-glucosamine residues in a peptidoglycan and between N-acetyl-D-glucosamine residues in chitodextrins.. In terms of biological role, required for cell separation during growth. The chain is Probable N-acetylmuramidase (acmA) from Lactococcus lactis subsp. lactis (strain IL1403) (Streptococcus lactis).